The following is a 129-amino-acid chain: NADPH-dependent 7-cyano-7-deazaguanine reductase (129 aa).

Cys34 (thioimide intermediate) is an active-site residue. Asp41 acts as the Proton donor in catalysis. Substrate-binding positions include 56–58 (VEL) and 75–76 (HE).

Belongs to the GTP cyclohydrolase I family. QueF type 1 subfamily.

It is found in the cytoplasm. The enzyme catalyses 7-aminomethyl-7-carbaguanine + 2 NADP(+) = 7-cyano-7-deazaguanine + 2 NADPH + 3 H(+). It participates in tRNA modification; tRNA-queuosine biosynthesis. Catalyzes the NADPH-dependent reduction of 7-cyano-7-deazaguanine (preQ0) to 7-aminomethyl-7-deazaguanine (preQ1). The sequence is that of NADPH-dependent 7-cyano-7-deazaguanine reductase from Thioalkalivibrio sulfidiphilus (strain HL-EbGR7).